The following is a 193-amino-acid chain: Ribosomal RNA large subunit methyltransferase E (193 aa).

Positions 51, 53, 69, 85, and 108 each coordinate S-adenosyl-L-methionine. Catalysis depends on Lys-148, which acts as the Proton acceptor.

Belongs to the class I-like SAM-binding methyltransferase superfamily. RNA methyltransferase RlmE family.

It localises to the cytoplasm. It carries out the reaction uridine(2552) in 23S rRNA + S-adenosyl-L-methionine = 2'-O-methyluridine(2552) in 23S rRNA + S-adenosyl-L-homocysteine + H(+). Specifically methylates the uridine in position 2552 of 23S rRNA at the 2'-O position of the ribose in the fully assembled 50S ribosomal subunit. The sequence is that of Ribosomal RNA large subunit methyltransferase E from Methanoregula boonei (strain DSM 21154 / JCM 14090 / 6A8).